A 1403-amino-acid polypeptide reads, in one-letter code: DNA-directed RNA polymerase subunit beta' (1403 aa).

Zn(2+)-binding residues include Cys-69, Cys-71, Cys-84, and Cys-87. Mg(2+)-binding residues include Asp-461, Asp-463, and Asp-465. Zn(2+) contacts are provided by Cys-818, Cys-891, Cys-898, and Cys-901. The segment at 1384–1403 (LELLRNEGEDETGNEELVAE) is disordered. Acidic residues predominate over residues 1391–1403 (GEDETGNEELVAE).

Belongs to the RNA polymerase beta' chain family. As to quaternary structure, the RNAP catalytic core consists of 2 alpha, 1 beta, 1 beta' and 1 omega subunit. When a sigma factor is associated with the core the holoenzyme is formed, which can initiate transcription. Mg(2+) is required as a cofactor. The cofactor is Zn(2+).

It catalyses the reaction RNA(n) + a ribonucleoside 5'-triphosphate = RNA(n+1) + diphosphate. In terms of biological role, DNA-dependent RNA polymerase catalyzes the transcription of DNA into RNA using the four ribonucleoside triphosphates as substrates. The sequence is that of DNA-directed RNA polymerase subunit beta' from Koribacter versatilis (strain Ellin345).